Here is a 227-residue protein sequence, read N- to C-terminus: Enolase-phosphatase E1 (227 aa).

Mg(2+) is bound by residues Asp-12 and Glu-14. Substrate is bound by residues 118-119 (SS) and Lys-159. Asp-186 is a binding site for Mg(2+).

It belongs to the HAD-like hydrolase superfamily. MasA/MtnC family. In terms of assembly, monomer. It depends on Mg(2+) as a cofactor.

The protein resides in the cytoplasm. Its subcellular location is the nucleus. It carries out the reaction 5-methylsulfanyl-2,3-dioxopentyl phosphate + H2O = 1,2-dihydroxy-5-(methylsulfanyl)pent-1-en-3-one + phosphate. Its pathway is amino-acid biosynthesis; L-methionine biosynthesis via salvage pathway; L-methionine from S-methyl-5-thio-alpha-D-ribose 1-phosphate: step 3/6. The protein operates within amino-acid biosynthesis; L-methionine biosynthesis via salvage pathway; L-methionine from S-methyl-5-thio-alpha-D-ribose 1-phosphate: step 4/6. Its function is as follows. Bifunctional enzyme that catalyzes the enolization of 2,3-diketo-5-methylthiopentyl-1-phosphate (DK-MTP-1-P) into the intermediate 2-hydroxy-3-keto-5-methylthiopentenyl-1-phosphate (HK-MTPenyl-1-P), which is then dephosphorylated to form the acireductone 1,2-dihydroxy-3-keto-5-methylthiopentene (DHK-MTPene). This chain is Enolase-phosphatase E1, found in Vanderwaltozyma polyspora (strain ATCC 22028 / DSM 70294 / BCRC 21397 / CBS 2163 / NBRC 10782 / NRRL Y-8283 / UCD 57-17) (Kluyveromyces polysporus).